The sequence spans 248 residues: MAAQSAPKVVLKSTTKMSLNERFTNMLKNKQPMPVNIRASMQQQQQLASARNRRLAQQMENRPSVQAALKLKQSLKQRLGKSNIQARLGRPIGALARGAIGGRGLPIIQRGLPRGGLRGGRATRTLLRGGMSLRGQNLLRGGRAVAPRMGLRRGGVRGRGGPGRGGLGRGAMGRGGIGGRGRGMIGRGRGGFGGRGRGRGRGRGALARPVLTKEQLDNQLDAYMSKTKGHLDAELDAYMAQTDPETND.

Alanine 2 is modified (N-acetylalanine). 3 positions are modified to phosphoserine: serine 40, serine 49, and serine 64. A Glycyl lysine isopeptide (Lys-Gly) (interchain with G-Cter in SUMO2) cross-link involves residue lysine 70. Residues 151–204 (LRRGGVRGRGGPGRGGLGRGAMGRGGIGGRGRGMIGRGRGGFGGRGRGRGRGRG) are disordered. An interaction with PRMT1 region spans residues 153–206 (RGGVRGRGGPGRGGLGRGAMGRGGIGGRGRGMIGRGRGGFGGRGRGRGRGRGAL). A compositionally biased stretch (gly residues) spans 157 to 195 (RGRGGPGRGGLGRGAMGRGGIGGRGRGMIGRGRGGFGGR). The GAR motif; involved in 5hmC binding motif lies at 194–203 (GRGRGRGRGR). Threonine 242 carries the phosphothreonine modification.

In terms of assembly, interacts with PRMT1 and PRMT5. Interacts with the 5FMC complex; the interaction is methylation-dependent. Interacts with FYTTD1, SET and PRC1 complex members CBX4, RNF2 and PHC2; the interactions are methylation-independent. Interacts with ZNF148. Interacts with WDR77 and ER. Post-translationally, asymmetrically methylated by PRMT1. Symmetrically methylated by PRMT5.

It is found in the nucleus. The protein resides in the nucleolus. The protein localises to the nucleoplasm. Its subcellular location is the nucleus speckle. In terms of biological role, plays an important role in the ligand-dependent activation of estrogen receptor target genes. May play a role in the silencing of fetal globin genes. Recruits the 5FMC complex to ZNF148, leading to desumoylation of ZNF148 and subsequent transactivation of ZNF148 target genes. Required for the tumorigenicity of glioblastoma cells. Binds to 5-hydroxymethylcytosine (5hmC) and associates with the methylosome complex containing PRMT1, PRMT5, MEP50 and ERH. The CHTOP-methylosome complex associated with 5hmC methylates H4R3 and transactivates genes involved in glioblastomagenesis. The chain is Chromatin target of PRMT1 protein (CHTOP) from Bos taurus (Bovine).